Reading from the N-terminus, the 265-residue chain is MLTFIGLGLYDERSITVEGREALRSADRVFAEFYTSRLVGADVDDLEAYHDTEIEVRAREGVEQDPEAILAAAEDGHTAFLTAGDTMISTTHTDLRLRAEERGIDTRVIHGVTAQSAASSLTGLQNYRFGKATTLPFPYAHGGDDVPGSVIDTIEANRERGLHTVVYLDIKVGTGPTGPDPDHEEYMTADVAAGLLADGWEDALAVVVARAGSPDAVVAADRLSALADREFGDPLHLLVIPGDLHHVEADALVGLAGAPAELVEE.

S-adenosyl-L-methionine is bound by residues Leu9, Asp85, Ile88, 113-114 (TA), Leu168, Ala211, and His236.

Belongs to the diphthine synthase family. As to quaternary structure, homodimer.

It carries out the reaction 2-[(3S)-amino-3-carboxypropyl]-L-histidyl-[translation elongation factor 2] + 3 S-adenosyl-L-methionine = diphthine-[translation elongation factor 2] + 3 S-adenosyl-L-homocysteine + 3 H(+). Its pathway is protein modification; peptidyl-diphthamide biosynthesis. In terms of biological role, S-adenosyl-L-methionine-dependent methyltransferase that catalyzes the trimethylation of the amino group of the modified target histidine residue in translation elongation factor 2 (EF-2), to form an intermediate called diphthine. The three successive methylation reactions represent the second step of diphthamide biosynthesis. The polypeptide is Diphthine synthase (Halorubrum lacusprofundi (strain ATCC 49239 / DSM 5036 / JCM 8891 / ACAM 34)).